The chain runs to 259 residues: BTB/POZ domain-containing protein KCTD4 (259 aa).

Positions 1-22 (MEHKINRREKEKDYEGKHNSLE) are disordered. The region spanning 33–134 (TLMTLNVGGY…EVKSRWEKEQ (102 aa)) is the BTB domain.

This chain is BTB/POZ domain-containing protein KCTD4 (KCTD4), found in Bos taurus (Bovine).